The primary structure comprises 304 residues: Dihydroorotate dehydrogenase B (NAD(+)), catalytic subunit (304 aa).

Residues S22 and K46–G47 contribute to the FMN site. Residues K46 and N70–L74 contribute to the substrate site. FMN is bound by residues N100 and N128. N128 is a substrate binding site. C131 serves as the catalytic Nucleophile. FMN contacts are provided by K166 and I192. N193–T194 provides a ligand contact to substrate. FMN-binding positions include G218, G244–G245, and G266–T267.

This sequence belongs to the dihydroorotate dehydrogenase family. Type 1 subfamily. In terms of assembly, heterotetramer of 2 PyrK and 2 PyrD type B subunits. However, the metal reductase complex seems to be composed of a heterooctamer of 4 PyrK and 4 PyrD subunits. FMN is required as a cofactor.

It localises to the cytoplasm. It catalyses the reaction (S)-dihydroorotate + NAD(+) = orotate + NADH + H(+). It participates in pyrimidine metabolism; UMP biosynthesis via de novo pathway; orotate from (S)-dihydroorotate (NAD(+) route): step 1/1. Functionally, catalyzes the conversion of dihydroorotate to orotate with NAD(+) as electron acceptor. Its function is as follows. Together with PyrK, also forms a metal reductase complex able to reduce Fe(III)-chelates to Fe(II)-chelates, as well as soluble Cr(VI) and U(VI), using NADH as electron donor. To a lesser extent, can also use NADPH as an electron donor. Is unable to reduce riboflavin and FMN with NADH as electron donor. May have an in vivo role in metal reduction in D.reducens, which is an organism capable of reducing contaminant heavy metals and radionuclides. The polypeptide is Dihydroorotate dehydrogenase B (NAD(+)), catalytic subunit (pyrD) (Desulforamulus reducens (strain ATCC BAA-1160 / DSM 100696 / MI-1) (Desulfotomaculum reducens)).